The following is a 185-amino-acid chain: Orotate phosphoribosyltransferase (185 aa).

5-phospho-alpha-D-ribose 1-diphosphate contacts are provided by residues Arg99, Lys100, Lys103, and 125–133 (EDVTTTGGS). Residues Thr129 and Arg157 each coordinate orotate.

It belongs to the purine/pyrimidine phosphoribosyltransferase family. PyrE subfamily. As to quaternary structure, homodimer. Mg(2+) serves as cofactor.

The enzyme catalyses orotidine 5'-phosphate + diphosphate = orotate + 5-phospho-alpha-D-ribose 1-diphosphate. The protein operates within pyrimidine metabolism; UMP biosynthesis via de novo pathway; UMP from orotate: step 1/2. Catalyzes the transfer of a ribosyl phosphate group from 5-phosphoribose 1-diphosphate to orotate, leading to the formation of orotidine monophosphate (OMP). This Methanococcus maripaludis (strain DSM 14266 / JCM 13030 / NBRC 101832 / S2 / LL) protein is Orotate phosphoribosyltransferase.